Reading from the N-terminus, the 296-residue chain is Bifunctional protein FolD (296 aa).

NADP(+) is bound by residues 166 to 168, Ser-195, and Thr-236; that span reads GRS.

The protein belongs to the tetrahydrofolate dehydrogenase/cyclohydrolase family. Homodimer.

It carries out the reaction (6R)-5,10-methylene-5,6,7,8-tetrahydrofolate + NADP(+) = (6R)-5,10-methenyltetrahydrofolate + NADPH. The catalysed reaction is (6R)-5,10-methenyltetrahydrofolate + H2O = (6R)-10-formyltetrahydrofolate + H(+). Its pathway is one-carbon metabolism; tetrahydrofolate interconversion. Functionally, catalyzes the oxidation of 5,10-methylenetetrahydrofolate to 5,10-methenyltetrahydrofolate and then the hydrolysis of 5,10-methenyltetrahydrofolate to 10-formyltetrahydrofolate. This is Bifunctional protein FolD from Dehalococcoides mccartyi (strain CBDB1).